A 384-amino-acid polypeptide reads, in one-letter code: Isoafricanol synthase (384 aa).

Positions 95, 245, 249, and 253 each coordinate Mg(2+).

The protein belongs to the terpene synthase family. Mg(2+) is required as a cofactor.

The catalysed reaction is (2E,6E)-farnesyl diphosphate + H2O = (+)-isoafricanol + diphosphate. In terms of biological role, catalyzes the cyclization of farnesyl diphosphate (FPP) to isoafricanol. The chain is Isoafricanol synthase from Streptomyces violaceusniger (strain Tu 4113).